The primary structure comprises 520 residues: Cytochrome b5 reductase 4 (520 aa).

An N-acetylmethionine modification is found at methionine 1. Residues 1-16 are compositionally biased toward low complexity; it reads MLNVPSQSFPGPSSQQ. Positions 1–27 are disordered; the sequence is MLNVPSQSFPGPSSQQRVASGGRSKVP. The region spanning 54 to 130 is the Cytochrome b5 heme-binding domain; it reads LIEVTEEELK…LKECLVGRMA (77 aa). Heme contacts are provided by histidine 89 and histidine 112. One can recognise a CS domain in the interval 164-255; it reads PSSPSYDWFQ…KENTSWKCLG (92 aa). The FAD-binding FR-type domain maps to 272 to 384; it reads LFYRKCQLVS…SNPEGNFIIS (113 aa). Residues 364 to 379 and 391 to 423 contribute to the FAD site; these read DQLQIGDYVSVSNPEG and DLFLLAAGTGFTPMVKVLNYALTNIPSLRKVKL.

Belongs to the flavoprotein pyridine nucleotide cytochrome reductase family. FAD is required as a cofactor.

Its subcellular location is the endoplasmic reticulum. It catalyses the reaction 2 Fe(III)-[cytochrome b5] + NADH = 2 Fe(II)-[cytochrome b5] + NAD(+) + H(+). Its function is as follows. NADH-cytochrome b5 reductase involved in endoplasmic reticulum stress response pathway. Plays a critical role in protecting pancreatic beta-cells against oxidant stress, possibly by protecting the cell from excess buildup of reactive oxygen species (ROS). The protein is Cytochrome b5 reductase 4 (CYB5R4) of Bos taurus (Bovine).